The chain runs to 450 residues: Phosphoglucosamine mutase (450 aa).

The active-site Phosphoserine intermediate is the Ser97. Residues Ser97, Asp236, Asp238, and Asp240 each contribute to the Mg(2+) site. Position 97 is a phosphoserine (Ser97).

Belongs to the phosphohexose mutase family. Mg(2+) serves as cofactor. Activated by phosphorylation.

The catalysed reaction is alpha-D-glucosamine 1-phosphate = D-glucosamine 6-phosphate. Its function is as follows. Catalyzes the conversion of glucosamine-6-phosphate to glucosamine-1-phosphate. This chain is Phosphoglucosamine mutase, found in Prochlorococcus marinus (strain AS9601).